The chain runs to 150 residues: Large ribosomal subunit protein bL9 (150 aa).

This sequence belongs to the bacterial ribosomal protein bL9 family.

Its function is as follows. Binds to the 23S rRNA. The polypeptide is Large ribosomal subunit protein bL9 (Ralstonia pickettii (strain 12J)).